We begin with the raw amino-acid sequence, 294 residues long: Indole-3-glycerol phosphate synthase (294 aa).

This sequence belongs to the TrpC family.

The enzyme catalyses 1-(2-carboxyphenylamino)-1-deoxy-D-ribulose 5-phosphate + H(+) = (1S,2R)-1-C-(indol-3-yl)glycerol 3-phosphate + CO2 + H2O. Its pathway is amino-acid biosynthesis; L-tryptophan biosynthesis; L-tryptophan from chorismate: step 4/5. The sequence is that of Indole-3-glycerol phosphate synthase from Synechococcus sp. (strain RCC307).